A 393-amino-acid chain; its full sequence is Chorismate synthase (393 aa).

NADP(+)-binding residues include Arg-40 and Arg-46. FMN-binding positions include 129–131 (RSS), 249–250 (QA), Gly-301, 316–320 (KPIPT), and Arg-342.

The protein belongs to the chorismate synthase family. As to quaternary structure, homotetramer. It depends on FMNH2 as a cofactor.

The catalysed reaction is 5-O-(1-carboxyvinyl)-3-phosphoshikimate = chorismate + phosphate. It participates in metabolic intermediate biosynthesis; chorismate biosynthesis; chorismate from D-erythrose 4-phosphate and phosphoenolpyruvate: step 7/7. Catalyzes the anti-1,4-elimination of the C-3 phosphate and the C-6 proR hydrogen from 5-enolpyruvylshikimate-3-phosphate (EPSP) to yield chorismate, which is the branch point compound that serves as the starting substrate for the three terminal pathways of aromatic amino acid biosynthesis. This reaction introduces a second double bond into the aromatic ring system. The polypeptide is Chorismate synthase (Geotalea daltonii (strain DSM 22248 / JCM 15807 / FRC-32) (Geobacter daltonii)).